A 178-amino-acid chain; its full sequence is Ribosome maturation factor RimM (178 aa).

Positions 101–178 constitute a PRC barrel domain; it reads EGEFYWYQLQ…EMRVDWDADF (78 aa).

The protein belongs to the RimM family. As to quaternary structure, binds ribosomal protein uS19.

The protein resides in the cytoplasm. Its function is as follows. An accessory protein needed during the final step in the assembly of 30S ribosomal subunit, possibly for assembly of the head region. Essential for efficient processing of 16S rRNA. May be needed both before and after RbfA during the maturation of 16S rRNA. It has affinity for free ribosomal 30S subunits but not for 70S ribosomes. The chain is Ribosome maturation factor RimM from Ectopseudomonas mendocina (strain ymp) (Pseudomonas mendocina).